A 166-amino-acid polypeptide reads, in one-letter code: MFRKVFSVALVTCGLLVIVQAAKKVEQCEKRIPDSLKPKLCQIRQYQLLEGADMEKHIDCVMRALGFVHPDGSGNYHALIEPLNAIDKDRKHGFNLETCGGNRDKLPKRKRAYAFYKCMLKSTSADSFKKAFDLKELVNAGKLSATAKYSPQVDTLMAQIDGMICK.

A signal peptide spans 1-21 (MFRKVFSVALVTCGLLVIVQA).

Belongs to the PBP/GOBP family. Interacts with host coagulation factor XII (F12) (inactive and activated) (via amino acids 1-77). Interacts with host high molecular weight kininogen (KNG1) (via amino acids 402-532). In terms of tissue distribution, female salivary gland (at protein level).

Its subcellular location is the secreted. Zn(2+) modulates binding to host coagulation factor XII (F12) and high molecular weight kininogen (KNG1). Functionally, salivary protein with anticoagulant activity that targets the intrinsic blood coagulation pathway in the host. Inhibits activation of the host plasma contact system by preventing the reciprocal activation of host coagulation factor XII (F12) and prekallikrein (KLKB1). Attenuates generation of bradykinin in host plasma. May bind and sequester different mediators involved in the host response, such as serotonin and histamine. This Anopheles stephensi (Indo-Pakistan malaria mosquito) protein is Short form salivary protein D7R1.